The chain runs to 523 residues: Apoptosis inhibitor 5-B (523 aa).

The segment at 1 to 360 is ARM-like and Heat-like helical repeats; it reads MPTVEELYRN…HQLGRKLPDF (360 aa). A disordered region spans residues 446–523; it reads VQKTDSGQKR…RGNRSRGRIY (78 aa). Residues 454 to 475 carry the Nuclear localization signal motif; sequence KRMSDETSSTSPPKKPVVGPKR. The segment covering 502–515 has biased composition (gly residues); it reads GFQGGRGRGWGGRG.

Belongs to the API5 family. As to quaternary structure, monomer.

Its subcellular location is the nucleus. May be an antiapoptotic factor. This chain is Apoptosis inhibitor 5-B (api5-b), found in Xenopus laevis (African clawed frog).